A 255-amino-acid polypeptide reads, in one-letter code: MSRLSLTRSPVSPLAAQGIPLPAQLTKSNAPVHIDVGGHMYTSSLATLTKYPDSRISRLFNGTEPIVLDSLKQHYFIDRDGEIFRYILSFLRTSKLLLPEDFKEFNLLYEEAKYYQLHPMVKELERWKQDKEHRKHFQPCDCLVVRVTPDLGERIALSGEKALIEEIFPETGDVMCNSVNAGWNQDPTHVIRFPLNGYCRLNSVQVLERMFQKGFHVAASCGGGVDSSQFSEYVLCREDRRMQPNTMRIKQEPLD.

In terms of domain architecture, BTB spans 30 to 100; it reads APVHIDVGGH…LRTSKLLLPE (71 aa).

In terms of assembly, forms oligomers, predominantly homopentamers. Interacts with TFAP2A; this interaction inhibits TFAP2A transcriptional activation.

It is found in the nucleus. In terms of biological role, during embryonic development, interferes with neural crest formation. Inhibits AP2 transcriptional activity by interaction with its activation domain. The protein is BTB/POZ domain-containing protein kctd15 (kctd15) of Xenopus tropicalis (Western clawed frog).